Reading from the N-terminus, the 52-residue chain is Repressor-like protein SSo7c3 (52 aa).

Residues 4 to 51 enclose the SpoVT-AbrB domain; the sequence is EEVVKVSRNYQVTIPAKVRQKFPVKEGDLVKVIYDENGGVVKIQILDS.

The polypeptide is Repressor-like protein SSo7c3 (Saccharolobus solfataricus (strain ATCC 35092 / DSM 1617 / JCM 11322 / P2) (Sulfolobus solfataricus)).